Reading from the N-terminus, the 266-residue chain is Orotidine 5'-phosphate decarboxylase (266 aa).

Residues D37, 59–61 (KTH), 91–100 (DRKFADIGNT), Y217, and R235 each bind substrate. K93 acts as the Proton donor in catalysis.

The protein belongs to the OMP decarboxylase family.

The catalysed reaction is orotidine 5'-phosphate + H(+) = UMP + CO2. The protein operates within pyrimidine metabolism; UMP biosynthesis via de novo pathway; UMP from orotate: step 2/2. This Cyberlindnera jadinii (Torula yeast) protein is Orotidine 5'-phosphate decarboxylase (URA3).